The primary structure comprises 156 residues: Snaclec A14 (156 aa).

Positions 1-23 (MGRFIFVRVGLLVVFLSLSGTGA) are cleaved as a signal peptide. Intrachain disulfides connect cysteine 27–cysteine 38, cysteine 55–cysteine 152, and cysteine 127–cysteine 144. The C-type lectin domain maps to 34–153 (YDQHCYKAFD…CGDDYPFVCK (120 aa)). Asparagine 141 is a glycosylation site (N-linked (GlcNAc...) asparagine).

The protein belongs to the snaclec family. In terms of assembly, heterodimer; disulfide-linked. As to expression, expressed by the venom gland.

It localises to the secreted. Its function is as follows. Interferes with one step of hemostasis (modulation of platelet aggregation, or coagulation cascade, for example). This Macrovipera lebetinus (Levantine viper) protein is Snaclec A14.